Reading from the N-terminus, the 310-residue chain is Protein CUP-SHAPED COTYLEDON 1 (310 aa).

The region spanning 20–172 is the NAC domain; the sequence is MPPGFRFHPT…EWVLCKVCLK (153 aa). A DNA-binding region spans residues 119–178; it reads LGMKKTLVFYKGRAPKGEKSCWVMHEYRLDGKFSYHYISSSAKDEWVLCKVCLKSGVVSR. Involved in transactivation activity regions lie at residues 179 to 210 and 306 to 310; these read ETNL…NTFA and WPFTL.

In terms of tissue distribution, expressed in inflorescence stems, rosette leaves, aerial parts of seedlings, flowers, floral buds and roots.

It localises to the nucleus. Its function is as follows. Transcription activator of STM and KNAT6. Involved in molecular mechanisms regulating shoot apical meristem (SAM) formation during embryogenesis and organ separation. Required for the fusion of septa of gynoecia along the length of the ovaries. Activates the shoot formation in callus in a STM-dependent manner. Seems to act as an inhibitor of cell division. The sequence is that of Protein CUP-SHAPED COTYLEDON 1 (NAC054) from Arabidopsis thaliana (Mouse-ear cress).